A 681-amino-acid chain; its full sequence is PTS system glucose-specific EIICBA component (681 aa).

Residues 3–414 (KKLFGQLQRI…LKYKTPGRED (412 aa)) enclose the PTS EIIC type-1 domain. A run of 10 helical transmembrane segments spans residues 16–36 (LMLP…GTAM), 73–93 (MIFA…AAIA), 126–146 (ILGI…GALA), 170–190 (FVPI…ALIW), 199–219 (AFST…FGFI), 273–293 (FMQG…LAIY), 303–323 (VVAG…ITEP), 328–348 (FLFV…LSFL), 355–375 (LHLG…GILP), and 383–403 (VIPV…FLIV). The PTS EIIB type-1 domain maps to 425–506 (TELPYAVLEA…QQIMNGQVVE (82 aa)). C447 serves as the catalytic Phosphocysteine intermediate; for EIIB activity. The PTS EIIA type-1 domain maps to 551-655 (DQVFSEKMMG…SDITPIIVTQ (105 aa)). H603 functions as the Tele-phosphohistidine intermediate; for EIIA activity in the catalytic mechanism.

The protein localises to the cell membrane. It carries out the reaction N(pros)-phospho-L-histidyl-[protein] + D-glucose(out) = D-glucose 6-phosphate(in) + L-histidyl-[protein]. The phosphoenolpyruvate-dependent sugar phosphotransferase system (sugar PTS), a major carbohydrate active transport system, catalyzes the phosphorylation of incoming sugar substrates concomitantly with their translocation across the cell membrane. This system is involved in glucose transport. This Staphylococcus aureus (strain MRSA252) protein is PTS system glucose-specific EIICBA component (ptsG).